Consider the following 69-residue polypeptide: Small, acid-soluble spore protein I (69 aa).

The protein belongs to the SspI family.

It is found in the spore core. The chain is Small, acid-soluble spore protein I from Geobacillus kaustophilus (strain HTA426).